Here is an 82-residue protein sequence, read N- to C-terminus: 4-(gamma-L-glutamylamino)butanoyl-[BtrI acyl-carrier protein] monooxygenase BtrO (82 aa).

Homotetramer.

It catalyses the reaction 4-(gamma-L-glutamylamino)butanoyl-[BtrI ACP] + FMNH2 + O2 = 4-(gamma-L-glutamylamino)-(2S)-2-hydroxybutanoyl-[BtrI ACP] + FMN + H2O + H(+). It functions in the pathway antibiotic biosynthesis; butirosin biosynthesis. Functionally, NAD(P)H:FMN oxidoreductase component of a two-component system involved in the biosynthesis of the side chain of the aminoglycoside antibiotics in the biosynthetic pathway of butirosin. Together with BtrO, mediates hydroxylation of gamma-L-Glu-GABA-S-BtrI. The sequence is that of 4-(gamma-L-glutamylamino)butanoyl-[BtrI acyl-carrier protein] monooxygenase BtrO (btrV) from Niallia circulans (Bacillus circulans).